The primary structure comprises 76 residues: Conotoxin Cl6.4 (76 aa).

An N-terminal signal peptide occupies residues M1–T19. A propeptide spanning residues E20–E47 is cleaved from the precursor. 3 disulfide bridges follow: C50/C66, C57/C70, and C65/C75.

Expressed by the venom duct.

It localises to the secreted. In Californiconus californicus (California cone), this protein is Conotoxin Cl6.4.